The primary structure comprises 145 residues: Transcription antitermination protein NusB (145 aa).

This sequence belongs to the NusB family.

Its function is as follows. Involved in transcription antitermination. Required for transcription of ribosomal RNA (rRNA) genes. Binds specifically to the boxA antiterminator sequence of the ribosomal RNA (rrn) operons. The protein is Transcription antitermination protein NusB of Burkholderia mallei (strain NCTC 10247).